A 1224-amino-acid chain; its full sequence is Potassium channel subfamily T member 1 (1224 aa).

The tract at residues 1–37 is disordered; it reads MARAKLPRSPSEGKAGPGDTPAGAAAPEEPHGLSPLL. At 1 to 79 the chain is on the cytoplasmic side; the sequence is MARAKLPRSP…LFFIKNQRSS (79 aa). Residues 13 to 27 are compositionally biased toward low complexity; sequence GKAGPGDTPAGAAAP. The helical transmembrane segment at 80–112 threads the bilayer; sequence LRIRLFNFSLKLLTCLLYIVRVLLDNPDQGIGC. The Extracellular segment spans residues 113–139; the sequence is WGCTKYNYTFNGSSSEFHWAPILWVER. 2 N-linked (GlcNAc...) asparagine glycosylation sites follow: Asn-119 and Asn-123. A helical membrane pass occupies residues 140 to 164; sequence KMALWVIQVIVATISFLETMLIIYL. Topologically, residues 165–178 are cytoplasmic; sequence SYKGNIWEQIFHVS. Residues 179 to 194 traverse the membrane as a helical segment; it reads FVLEMINTLPFIITVF. The Extracellular segment spans residues 195-201; it reads WPPLRNL. A helical membrane pass occupies residues 202 to 219; that stretch reads FIPVFLNCWLAKHALENM. The Cytoplasmic segment spans residues 220-232; it reads INDFHRAILRTQS. Residues 233 to 260 traverse the membrane as a helical segment; that stretch reads AMFNQVLILFCTLLCLVFTGTCGIQHLE. Over 261-267 the chain is Extracellular; that stretch reads RAGGNLN. The pore-forming intramembrane region spans 268–288; the sequence is LLTSFYFCIVTFSTVGFGDVT. 2 residues coordinate K(+): Val-282 and Gly-283. The Extracellular portion of the chain corresponds to 289 to 290; sequence PK. Residues 291–324 traverse the membrane as a helical segment; sequence IWPSQLLVVILICVTLVVLPLQFEELVYLWMERQ. Over 325-1224 the chain is Cytoplasmic; that stretch reads KSGGNYSRHR…NPETRDETQL (900 aa). The 137-residue stretch at 338 to 474 folds into the RCK N-terminal 1 domain; the sequence is EKHVVLCVSS…FHVKFADHVV (137 aa). Na(+) is bound by residues Leu-499, His-502, Ser-524, and Asn-526. The interval 644 to 675 is disordered; that stretch reads QNTDCRPSQGGSGGDGTKLTLPTENGSGSRRP. Over residues 663–673 the composition is skewed to polar residues; the sequence is TLPTENGSGSR. Cys-744 and Cys-745 together coordinate Zn(2+). K(+)-binding residues include Arg-747 and Lys-750. Na(+)-binding residues include Arg-747 and Lys-750. Residues Cys-752 and His-754 each contribute to the Zn(2+) site. K(+) contacts are provided by Asn-755, Tyr-757, Tyr-763, and Gly-764. Tyr-757 is a binding site for Na(+). Phe-765 contacts Na(+). Residues 767 to 907 form the RCK N-terminal 2 domain; that stretch reads NKLIIVSAET…QFRAKDSYSL (141 aa). K(+) contacts are provided by Ser-773, Leu-804, Asp-806, Gly-828, and Asp-851. Disordered stretches follow at residues 1038-1066 and 1198-1224; these read REAK…ADPV and SSSQ…ETQL. Low complexity-rich tracts occupy residues 1045-1055 and 1198-1215; these read GTRAASGSGST and SSSQ…SSCN.

Belongs to the potassium channel family. Calcium-activated (TC 1.A.1.3) subfamily. KCa4.1/KCNT1 sub-subfamily. As to quaternary structure, homotetramer; which constitutes the Na(+)-activated K(+) channel. Interacts with KCNT2; these heterodimer channels differ from the homomers in their unitary conductance, kinetic behavior, subcellular localization, and response to activation of protein kinase C. Interacts (via C-terminus) with FMR1; this interaction alters gating properties of KCNT1. Interacts with CRBN via its cytoplasmic C-terminus. Post-translationally, phosphorylated by protein kinase C. Phosphorylation of the C-terminal domain increases channel activity. As to expression, enriched in the brainstem and olfactory bulb and detected at significant levels in four different brain regions.

It is found in the cell membrane. It carries out the reaction K(+)(in) = K(+)(out). Activated by high intracellular Na(+). In addition to activation by Na(+), is cooperatively activated by intracellular Cl(-) levels. Inhibited by Zn(2+). Activated upon stimulation of G-protein coupled receptors, such as CHRM1 and GRIA1. Its function is as follows. Sodium-activated K(+) channel. Acts as an important mediator of neuronal membrane excitability. Contributes to the delayed outward currents. Regulates neuronal bursting in sensory neurons. Contributes to synaptic development and plasticity. This Mus musculus (Mouse) protein is Potassium channel subfamily T member 1 (Kcnt1).